The following is an 84-amino-acid chain: Dolichol phosphate-mannose biosynthesis regulatory protein (84 aa).

2 helical membrane passes run 11-31 (FGLV…VILL) and 49-69 (YAVL…GLFI).

This sequence belongs to the DPM2 family. As to quaternary structure, component of the dolichol-phosphate mannose (DPM) synthase complex composed of DPM1, DPM2 and DPM3; in the complex interacts directly with DPM3. Component of the glycosylphosphatidylinositol-N-acetylglucosaminyltransferase (GPI-GnT) complex composed at least by PIGA, PIGC, PIGH, PIGP, PIGQ, PIGY and DPM2. Interacts with PIGA, PIGC and PIGQ.

The protein resides in the endoplasmic reticulum membrane. It functions in the pathway protein modification; protein glycosylation. In terms of biological role, regulates the biosynthesis of dolichol phosphate-mannose. Regulatory subunit of the dolichol-phosphate mannose (DPM) synthase complex; essential for the ER localization and stable expression of DPM1. Part of the glycosylphosphatidylinositol-N-acetylglucosaminyltransferase (GPI-GnT) complex that catalyzes the transfer of N-acetylglucosamine from UDP-N-acetylglucosamine to phosphatidylinositol and participates in the first step of GPI biosynthesis. May act by regulating the GPI-GNT complex. This Mus musculus (Mouse) protein is Dolichol phosphate-mannose biosynthesis regulatory protein.